Reading from the N-terminus, the 261-residue chain is Cytochrome c oxidase subunit 3 (261 aa).

The Mitochondrial matrix portion of the chain corresponds to 1-15; the sequence is MAHQAHAYHMVDPSP. Residues 16 to 34 traverse the membrane as a helical segment; sequence WPLTGAVAALLMSSGLAIW. Residues 35-40 are Mitochondrial intermembrane-facing; sequence FHLHSM. Residues 41–66 form a helical membrane-spanning segment; that stretch reads TLIVLGMILLILTMIQWWRDIIREGT. Residues 67–72 lie on the Mitochondrial matrix side of the membrane; sequence FQGHHT. The chain crosses the membrane as a helical span at residues 73–105; that stretch reads PPVQKGLRYGMILFITSEVFFFLGFFWAFYHSS. Over 106-128 the chain is Mitochondrial intermembrane; sequence LAPTPELGGCWPPTGLTTLDPFE. A helical transmembrane segment spans residues 129–152; the sequence is VPLLNTAVLLASGVTVTWAHHSLM. At 153–155 the chain is on the mitochondrial matrix side; sequence EGE. A helical transmembrane segment spans residues 156-183; sequence RKQAIQSLALTILLGLYFTALQAMEYYE. At 184–190 the chain is on the mitochondrial intermembrane side; sequence APFTIAD. The chain crosses the membrane as a helical span at residues 191 to 223; the sequence is GVYGSTFFVATGFHGLHVIIGSTFLAVCLLRQV. The Mitochondrial matrix segment spans residues 224–232; that stretch reads LFHFTSDHH. Residues 233 to 256 form a helical membrane-spanning segment; it reads FGFEAAAWYWHFVDVVWLFLYVSI. Residues 257-261 are Mitochondrial intermembrane-facing; it reads YWWGS.

This sequence belongs to the cytochrome c oxidase subunit 3 family. Component of the cytochrome c oxidase (complex IV, CIV), a multisubunit enzyme composed of 14 subunits. The complex is composed of a catalytic core of 3 subunits MT-CO1, MT-CO2 and MT-CO3, encoded in the mitochondrial DNA, and 11 supernumerary subunits COX4I, COX5A, COX5B, COX6A, COX6B, COX6C, COX7A, COX7B, COX7C, COX8 and NDUFA4, which are encoded in the nuclear genome. The complex exists as a monomer or a dimer and forms supercomplexes (SCs) in the inner mitochondrial membrane with NADH-ubiquinone oxidoreductase (complex I, CI) and ubiquinol-cytochrome c oxidoreductase (cytochrome b-c1 complex, complex III, CIII), resulting in different assemblies (supercomplex SCI(1)III(2)IV(1) and megacomplex MCI(2)III(2)IV(2)).

The protein localises to the mitochondrion inner membrane. The enzyme catalyses 4 Fe(II)-[cytochrome c] + O2 + 8 H(+)(in) = 4 Fe(III)-[cytochrome c] + 2 H2O + 4 H(+)(out). Functionally, component of the cytochrome c oxidase, the last enzyme in the mitochondrial electron transport chain which drives oxidative phosphorylation. The respiratory chain contains 3 multisubunit complexes succinate dehydrogenase (complex II, CII), ubiquinol-cytochrome c oxidoreductase (cytochrome b-c1 complex, complex III, CIII) and cytochrome c oxidase (complex IV, CIV), that cooperate to transfer electrons derived from NADH and succinate to molecular oxygen, creating an electrochemical gradient over the inner membrane that drives transmembrane transport and the ATP synthase. Cytochrome c oxidase is the component of the respiratory chain that catalyzes the reduction of oxygen to water. Electrons originating from reduced cytochrome c in the intermembrane space (IMS) are transferred via the dinuclear copper A center (CU(A)) of subunit 2 and heme A of subunit 1 to the active site in subunit 1, a binuclear center (BNC) formed by heme A3 and copper B (CU(B)). The BNC reduces molecular oxygen to 2 water molecules using 4 electrons from cytochrome c in the IMS and 4 protons from the mitochondrial matrix. The sequence is that of Cytochrome c oxidase subunit 3 (mt-co3) from Danio rerio (Zebrafish).